The following is a 55-amino-acid chain: Large ribosomal subunit protein bL33 (55 aa).

The protein belongs to the bacterial ribosomal protein bL33 family.

The chain is Large ribosomal subunit protein bL33 from Beijerinckia indica subsp. indica (strain ATCC 9039 / DSM 1715 / NCIMB 8712).